The primary structure comprises 261 residues: GTP cyclohydrolase FolE2 (261 aa).

Belongs to the GTP cyclohydrolase IV family.

It carries out the reaction GTP + H2O = 7,8-dihydroneopterin 3'-triphosphate + formate + H(+). It participates in cofactor biosynthesis; 7,8-dihydroneopterin triphosphate biosynthesis; 7,8-dihydroneopterin triphosphate from GTP: step 1/1. Its function is as follows. Converts GTP to 7,8-dihydroneopterin triphosphate. The sequence is that of GTP cyclohydrolase FolE2 from Fervidobacterium nodosum (strain ATCC 35602 / DSM 5306 / Rt17-B1).